The following is a 435-amino-acid chain: MSDSNSTFKDLGVAKWLAEALNSMKITQPTTIQKACIPEILAGRDCIGGAKTGSGKTIAFAAPMLTKWSADPCGMFGIVLTPTRELAMQIAEQFTALGSVMNIRVALVVGGEDIVSQALELQRKPHFIIATPGRLAHHIMHSGEDTIGGLKRVRYLVLDEADILLTDTFSDALATCVQILPPKEKRQNLLFTATMTDQVLALKDAPPTSGKPPLFSFHVENLDDLAVPASLQTTYLLVPEHVKEAYLYQVLSSEEYKSKSAIVFVNRTISAEILRRMLMQLEIRVTSLHSQMPQRERTNSLQRFRANAARVLIATDVASRGLDIPAVQLVVNYDIPANPDTYIHRAGRTARAGRGGEALSFIAPKDVSRIQAIEERIGKKMDEFTKVGDTALIRKSLNKVTVAKRESLMAMDKEGFGERRKTQRSKGKQTKSLHS.

Positions S6–K34 match the Q motif motif. In terms of domain architecture, Helicase ATP-binding spans I37–P213. A50–T57 lines the ATP pocket. Positions D159–D162 match the DEAD box motif. One can recognise a Helicase C-terminal domain in the interval Y246–I393. Over residues M411–R420 the composition is skewed to basic and acidic residues. Residues M411–S435 are disordered. Residues K421 to S435 are compositionally biased toward basic residues.

Belongs to the DEAD box helicase family. DDX49/DBP8 subfamily.

It localises to the nucleus. It is found in the nucleolus. The catalysed reaction is ATP + H2O = ADP + phosphate + H(+). In terms of biological role, ATP-binding RNA helicase involved in 40S ribosomal subunit biogenesis and is required for the normal formation of 18S rRNAs through pre-rRNA processing at A0, A1 and A2 sites. Required for vegetative growth. This is ATP-dependent RNA helicase DBP8 (DBP8) from Eremothecium gossypii (strain ATCC 10895 / CBS 109.51 / FGSC 9923 / NRRL Y-1056) (Yeast).